A 286-amino-acid chain; its full sequence is Small ribosomal subunit protein uS3 (286 aa).

Positions 39-107 constitute a KH type-2 domain; the sequence is VREYLKKKLA…PVHVNIEEIR (69 aa). Residues 213–286 form a disordered region; that stretch reads QAGAGTAAPQ…KPGVNDAAAS (74 aa). The segment covering 241 to 262 has biased composition (basic and acidic residues); that stretch reads GRADARSDGKAGEKKGPRKSDN.

This sequence belongs to the universal ribosomal protein uS3 family. Part of the 30S ribosomal subunit. Forms a tight complex with proteins S10 and S14.

Binds the lower part of the 30S subunit head. Binds mRNA in the 70S ribosome, positioning it for translation. This Nitrosospira multiformis (strain ATCC 25196 / NCIMB 11849 / C 71) protein is Small ribosomal subunit protein uS3.